The chain runs to 683 residues: Capsid polyprotein VP90 (683 aa).

Residues Met1–Pro13 are compositionally biased toward low complexity. Disordered regions lie at residues Met1 to Leu45 and Pro391 to Ala413. Residues Lys14–Lys39 are compositionally biased toward basic residues. The span at Leu398 to Ala413 shows a compositional bias: pro residues.

Belongs to the astroviridae capsid polyprotein family. In terms of processing, specific enzymatic cleavages by the host yield mature proteins.

It localises to the virion. Self-assembles to form an icosahedral T=3 immature capsid. The polypeptide is Capsid polyprotein VP90 (Gallus gallus (Chicken)).